Consider the following 327-residue polypeptide: tRNA dimethylallyltransferase (327 aa).

Glycine 18–threonine 25 is a binding site for ATP. Threonine 20–threonine 25 serves as a coordination point for substrate. Interaction with substrate tRNA regions lie at residues aspartate 43–leucine 46, glutamine 167–arginine 171, and arginine 251–arginine 256.

Belongs to the IPP transferase family. Monomer. Mg(2+) is required as a cofactor.

It catalyses the reaction adenosine(37) in tRNA + dimethylallyl diphosphate = N(6)-dimethylallyladenosine(37) in tRNA + diphosphate. Its function is as follows. Catalyzes the transfer of a dimethylallyl group onto the adenine at position 37 in tRNAs that read codons beginning with uridine, leading to the formation of N6-(dimethylallyl)adenosine (i(6)A). The protein is tRNA dimethylallyltransferase of Methylibium petroleiphilum (strain ATCC BAA-1232 / LMG 22953 / PM1).